Here is a 247-residue protein sequence, read N- to C-terminus: tRNA (guanine-N(7)-)-methyltransferase (247 aa).

S-adenosyl-L-methionine is bound by residues glycine 70, 93–94, 128–129, and leucine 148; these read EI and NA. Residue aspartate 151 is part of the active site. S-adenosyl-L-methionine is bound at residue 226–228; the sequence is SEE.

It belongs to the class I-like SAM-binding methyltransferase superfamily. TrmB family.

Its subcellular location is the nucleus. It carries out the reaction guanosine(46) in tRNA + S-adenosyl-L-methionine = N(7)-methylguanosine(46) in tRNA + S-adenosyl-L-homocysteine. Its pathway is tRNA modification; N(7)-methylguanine-tRNA biosynthesis. Its function is as follows. Catalyzes the formation of N(7)-methylguanine at position 46 (m7G46) in tRNA. The polypeptide is tRNA (guanine-N(7)-)-methyltransferase (Drosophila virilis (Fruit fly)).